A 241-amino-acid chain; its full sequence is Sugar fermentation stimulation protein homolog (241 aa).

This sequence belongs to the SfsA family.

This chain is Sugar fermentation stimulation protein homolog, found in Nostoc sp. (strain PCC 7120 / SAG 25.82 / UTEX 2576).